A 169-amino-acid polypeptide reads, in one-letter code: Protein kinase-interacting protein PIKP1 (169 aa).

Interacts with protein kinase PK1.

Its function is as follows. Plays a role in the stimulation of the viral kinase PK1 function in very late transcription and in expression of genes required for budded virus production. The polypeptide is Protein kinase-interacting protein PIKP1 (AC24) (Lepidoptera (butterflies and moths)).